A 523-amino-acid chain; its full sequence is Solute carrier family 2, facilitated glucose transporter member 2 (523 aa).

Topologically, residues 1–10 (MSEDKITGTL) are cytoplasmic. Residues 11–31 (AFTVFTAVLSSFQFGYDIGVI) form a helical membrane-spanning segment. The Extracellular segment spans residues 32–97 (NAPQEVIISH…SAHIVTMLWS (66 aa)). A glycan (N-linked (GlcNAc...) asparagine) is linked at Asn-62. Residues 98 to 118 (LSVSSFAVGGMVASFFGGWLG) traverse the membrane as a helical segment. The Cytoplasmic segment spans residues 119-126 (DKLGRIKA). A helical membrane pass occupies residues 127–147 (MLAANSLSLTGALLMGCSKFG). Residues 148–157 (PAHALIIAGR) are Extracellular-facing. Residues 158 to 178 (SVSGLYCGLISGLVPMYIGEI) form a helical membrane-spanning segment. The Cytoplasmic portion of the chain corresponds to 179-186 (APTTLRGA). The chain crosses the membrane as a helical span at residues 187–207 (LGTLHQLALVTGILISQIAGL). Gln-192 serves as a coordination point for D-glucose. At 208-216 (SFILGNQDH) the chain is on the extracellular side. The chain crosses the membrane as a helical span at residues 217-237 (WHILLGLSAVPALLQCLLLLF). At 238–302 (CPESPRYLYI…LFTDANYRQP (65 aa)) the chain is on the cytoplasmic side. A helical transmembrane segment spans residues 303–323 (ILVALMLHMAQQFSGINGIFY). Residues 313–314 (QQ) and Asn-319 contribute to the D-glucose site. At 324 to 337 (YSTSIFQTAGISQP) the chain is on the extracellular side. The helical transmembrane segment at 338–358 (VYATIGVGAINMIFTAVSVLL) threads the bilayer. Asn-348 serves as a coordination point for D-glucose. Over 359-367 (VEKAGRRTL) the chain is Cytoplasmic. The helical transmembrane segment at 368–388 (FLTGMIGMFFCTIFMSVGLVL) threads the bilayer. Residues 389-401 (LDKFAWMSYVSMT) lie on the Extracellular side of the membrane. Residues 402–422 (AIFLFVSFFEIGPGPIPWFMV) form a helical membrane-spanning segment. The D-glucose site is built by Glu-411 and Trp-419. Residues 423–432 (AEFFSQGPRP) are Cytoplasmic-facing. A helical transmembrane segment spans residues 433-453 (TALALAAFSNWVCNFVIALCF). Residues 454-460 (QYIADFL) are Extracellular-facing. Residues 461–481 (GPYVFFLFAGVVLVFTLFTFF) traverse the membrane as a helical segment. Residues 482 to 523 (KVPETKGKSFEEIAAEFRKKSGSAPPRKAAVQMEFLASSESV) lie on the Cytoplasmic side of the membrane. A Phosphoserine modification is found at Ser-522.

Belongs to the major facilitator superfamily. Sugar transporter (TC 2.A.1.1) family. Glucose transporter subfamily. N-glycosylated; required for stability and retention at the cell surface of pancreatic beta cells. In terms of tissue distribution, in embryo, expressed in endoderm layer of yolk sac and liver primordium.

The protein resides in the cell membrane. It catalyses the reaction D-glucose(out) = D-glucose(in). The enzyme catalyses D-fructose(out) = D-fructose(in). The catalysed reaction is L-dehydroascorbate(out) = L-dehydroascorbate(in). It carries out the reaction D-galactose(in) = D-galactose(out). Its activity is regulated as follows. D-glucose and maltose competitively inhibit fructose transport. D-glucose, D-fructose and maltose inhibit deoxyglucose transport. In terms of biological role, facilitative hexose transporter that mediates the transport of glucose, fructose and galactose. Likely mediates the bidirectional transfer of glucose across the plasma membrane of hepatocytes and is responsible for uptake of glucose by the beta cells; may comprise part of the glucose-sensing mechanism of the beta cell. May also participate with the Na(+)/glucose cotransporter in the transcellular transport of glucose in the small intestine and kidney. Also able to mediate the transport of dehydroascorbate. The chain is Solute carrier family 2, facilitated glucose transporter member 2 from Mus musculus (Mouse).